Reading from the N-terminus, the 158-residue chain is Phosphopantetheine adenylyltransferase (158 aa).

A substrate-binding site is contributed by Thr9. Residues 9-10 (TF) and His17 each bind ATP. Residues Lys41, Leu73, and Arg87 each coordinate substrate. ATP-binding positions include 88–90 (GLR), Glu98, and 123–129 (YAYISSS).

It belongs to the bacterial CoaD family. In terms of assembly, homohexamer. It depends on Mg(2+) as a cofactor.

The protein resides in the cytoplasm. The catalysed reaction is (R)-4'-phosphopantetheine + ATP + H(+) = 3'-dephospho-CoA + diphosphate. The protein operates within cofactor biosynthesis; coenzyme A biosynthesis; CoA from (R)-pantothenate: step 4/5. In terms of biological role, reversibly transfers an adenylyl group from ATP to 4'-phosphopantetheine, yielding dephospho-CoA (dPCoA) and pyrophosphate. The polypeptide is Phosphopantetheine adenylyltransferase (Allochromatium vinosum (strain ATCC 17899 / DSM 180 / NBRC 103801 / NCIMB 10441 / D) (Chromatium vinosum)).